We begin with the raw amino-acid sequence, 169 residues long: Putative prolyl-tRNA synthetase associated domain-containing protein 1 (169 aa).

Belongs to the PRORSD1 family.

This chain is Putative prolyl-tRNA synthetase associated domain-containing protein 1 (PRORSD1P), found in Homo sapiens (Human).